A 322-amino-acid chain; its full sequence is MHAIFCRRVAVGCSSPQLTKLVTKQASQSRHSLSHLLPFDLSSRFVPPYVVSRSARVHGFFAGKLGNTNLKLKFGNVMESRAGFFSSELPSHGFESGGFTGFQKRGWKSWINGANGVVFGLVIANAAVFTMWRVLGKDNMWMVKNFMLSRYSFMTGRIHTLITSGFSHVGATHIILNMMGLCYFGARIARSFGPRYLLKLYFAGALGGSVFFLSSHALSVISLKGQRVVPKDQLKVPIGKLGANGPVYAITLLDMLLYPKVTTYFGLMLRVPVFAGIYSLGLNIIKMLEGKNNNTLTSLDQLGGVVVAVIAWARIRKGRFCY.

A chloroplast-targeting transit peptide spans 1–52 (MHAIFCRRVAVGCSSPQLTKLVTKQASQSRHSLSHLLPFDLSSRFVPPYVVS). Helical transmembrane passes span 110–130 (WINGANGVVFGLVIANAAVFT), 166–186 (FSHVGATHIILNMMGLCYFGA), 201–221 (YFAGALGGSVFFLSSHALSVI), 238–258 (IGKLGANGPVYAITLLDMLLY), 265–285 (FGLMLRVPVFAGIYSLGLNII), and 295–315 (TLTSLDQLGGVVVAVIAWARI).

This sequence belongs to the peptidase S54 family.

The protein resides in the plastid. The protein localises to the chloroplast membrane. Rhomboid-type serine protease that catalyzes intramembrane proteolysis. May cleave the plastid translocon component Tic40. The polypeptide is Rhomboid-like protein 16, chloroplastic (Arabidopsis thaliana (Mouse-ear cress)).